We begin with the raw amino-acid sequence, 131 residues long: Large ribosomal subunit protein bL21 (131 aa).

Residues 106 to 116 are compositionally biased toward basic and acidic residues; it reads TIDDMPKKEAA. Residues 106-131 form a disordered region; the sequence is TIDDMPKKEAAPAKARRSTKKAAAAE.

Belongs to the bacterial ribosomal protein bL21 family. Part of the 50S ribosomal subunit. Contacts protein L20.

This protein binds to 23S rRNA in the presence of protein L20. This is Large ribosomal subunit protein bL21 from Koribacter versatilis (strain Ellin345).